The sequence spans 326 residues: MYGIEYTTILIFLTSITLLNYILKSITRIMDYIIYRFLLIVVVLATMINAQNYGVNLPITGSMDTAYANSTQSEPFLTSTLCLYYPVEASNEIADTEWKDTLSQLFLTKGWPTGSVYFKEYTDIAAFSVEPQLYCDYNLVLMKYDSTQELDMSELADLILNEWLCNPMDITLYYYQQTDEANKWISMGSSCTVKVCPLNTQTLGIGCLITNPDTFETVATTEKLVITDVVDGVNHKLNVTTATCTIRNCKKLGPRENVAIIQVGGANVLDITADPTTAPQTERMMRINWKKWWQVFYTVVDYVNQIIQTMSKRSRSLNSSAFYYRV.

Residues 1–50 form the signal peptide; the sequence is MYGIEYTTILIFLTSITLLNYILKSITRIMDYIIYRFLLIVVVLATMINA. The N-linked (GlcNAc...) asparagine; by host glycan is linked to Asn69. 4 disulfide bridges follow: Cys82-Cys135, Cys165-Cys249, Cys191-Cys244, and Cys196-Cys207. Asp95 contacts Ca(2+). The tract at residues 165 to 167 is CNP motif; interaction with ITGAV/ITGB3; it reads CNP. 7 residues coordinate Ca(2+): Gln177, Gly206, Thr214, Glu216, Asp228, Val229, and Asp231. A glycan (N-linked (GlcNAc...) asparagine; by host) is linked at Asn238. Residues 253-255 form a GPR motif; interaction with ITGAX/ITGB2 region; sequence GPR. Residue Asp301 coordinates Ca(2+). Asn318 carries an N-linked (GlcNAc...) asparagine; by host glycan.

The protein belongs to the rotavirus VP7 family. Homotrimer; disulfide-linked. 2 Ca(2+) ions bound at each subunit interface in the trimer hold the trimer together. Interacts with the intermediate capsid protein VP6. Interacts with the outer capsid protein VP5*. N-glycosylated. Post-translationally, the N-terminus is blocked possibly by pyroglutamic acid.

The protein resides in the virion. Its subcellular location is the host endoplasmic reticulum lumen. In terms of biological role, calcium-binding protein that interacts with rotavirus cell receptors once the initial attachment by VP4 has been achieved. Rotavirus attachment and entry into the host cell probably involves multiple sequential contacts between the outer capsid proteins VP4 and VP7, and the cell receptors. Following entry into the host cell, low intracellular or intravesicular Ca(2+) concentration probably causes the calcium-stabilized VP7 trimers to dissociate from the virion. This step is probably necessary for the membrane-disrupting entry step and the release of VP4, which is locked onto the virion by VP7. The protein is Outer capsid glycoprotein VP7 of Rotavirus A (strain RVA/Cow/United Kingdom/UK/1975/G6P7[5]) (RV-A).